We begin with the raw amino-acid sequence, 406 residues long: Alpha-1-antitrypsin (406 aa).

The N-terminal stretch at 1–24 is a signal peptide; that stretch reads MTSSISWGLLLLAGLCCLVPSFLA. Ser33 carries the phosphoserine modification. N-linked (GlcNAc...) asparagine glycans are attached at residues Asn59, Asn96, and Asn260. Residues 362 to 381 form an RCL region; the sequence is GTTVLEAVPMSIPPDVCFKN. Ser372 bears the Phosphoserine mark.

Belongs to the serpin family. In terms of assembly, interacts with CELA2A. Interacts with ERGIC3 and LMAN1/ERGIC53. Interacts with PRSS1/Trypsin. Plasma.

The protein localises to the secreted. Functionally, inhibitor of serine proteases. Can inhibit elastase, trypsin, chymotrypsin and plasmin. This chain is Alpha-1-antitrypsin, found in Meriones unguiculatus (Mongolian jird).